The chain runs to 107 residues: Universal stress protein B homolog (107 aa).

The next 2 membrane-spanning stretches (helical) occupy residues 6–26 (IILF…LTAL) and 86–106 (VREL…AAFL).

This sequence belongs to the universal stress protein B family.

It localises to the cell inner membrane. In Vibrio vulnificus (strain CMCP6), this protein is Universal stress protein B homolog.